Here is a 122-residue protein sequence, read N- to C-terminus: Small ribosomal subunit protein uS13 (122 aa).

The interval 93-122 (RRGLPVRGQRTKTNARTRKGPKKTIAGKKK) is disordered.

This sequence belongs to the universal ribosomal protein uS13 family. As to quaternary structure, part of the 30S ribosomal subunit. Forms a loose heterodimer with protein S19. Forms two bridges to the 50S subunit in the 70S ribosome.

Its function is as follows. Located at the top of the head of the 30S subunit, it contacts several helices of the 16S rRNA. In the 70S ribosome it contacts the 23S rRNA (bridge B1a) and protein L5 of the 50S subunit (bridge B1b), connecting the 2 subunits; these bridges are implicated in subunit movement. Contacts the tRNAs in the A and P-sites. The polypeptide is Small ribosomal subunit protein uS13 (Corynebacterium efficiens (strain DSM 44549 / YS-314 / AJ 12310 / JCM 11189 / NBRC 100395)).